A 116-amino-acid polypeptide reads, in one-letter code: Large ribosomal subunit protein bL17 (116 aa).

It belongs to the bacterial ribosomal protein bL17 family. Part of the 50S ribosomal subunit. Contacts protein L32.

The sequence is that of Large ribosomal subunit protein bL17 from Helicobacter pylori (strain G27).